The chain runs to 170 residues: uncharacterized protein (170 aa).

This is an uncharacterized protein from Acidianus convivator (ATV).